Consider the following 190-residue polypeptide: uncharacterized protein (190 aa).

Helical transmembrane passes span 15–35 (LVMS…VLAI), 58–78 (FSSF…GVLI), 94–114 (FFSA…YFAF), and 148–168 (FLFF…SFFV).

It localises to the membrane. This is an uncharacterized protein from Saccharomyces cerevisiae (strain ATCC 204508 / S288c) (Baker's yeast).